An 896-amino-acid polypeptide reads, in one-letter code: Translation initiation factor IF-2 (896 aa).

Basic and acidic residues-rich tracts occupy residues 94-159 (KRDP…KDKV) and 166-219 (DMTK…EKNW). The disordered stretch occupies residues 94–307 (KRDPQEAERL…GSALQQGFQK (214 aa)). A compositionally biased stretch (basic residues) spans 256–271 (GRGRNAKAARPAKKGN). Positions 272–285 (KHAESKADREEARA) are enriched in basic and acidic residues. The tr-type G domain occupies 395 to 564 (PRAPVVTIMG…LLQAEVLELK (170 aa)). A G1 region spans residues 404-411 (GHVDHGKT). 404 to 411 (GHVDHGKT) is a GTP binding site. A G2 region spans residues 429-433 (GITQH). The G3 stretch occupies residues 450 to 453 (DTPG). GTP contacts are provided by residues 450–454 (DTPGH) and 504–507 (NKID). Positions 504–507 (NKID) are G4. The interval 540-542 (SAK) is G5.

This sequence belongs to the TRAFAC class translation factor GTPase superfamily. Classic translation factor GTPase family. IF-2 subfamily.

It localises to the cytoplasm. Functionally, one of the essential components for the initiation of protein synthesis. Protects formylmethionyl-tRNA from spontaneous hydrolysis and promotes its binding to the 30S ribosomal subunits. Also involved in the hydrolysis of GTP during the formation of the 70S ribosomal complex. This chain is Translation initiation factor IF-2 (infB), found in Klebsiella oxytoca.